We begin with the raw amino-acid sequence, 157 residues long: MVQVVEVLVPGGQASPGPPLGPAIGPLGLNVKQVVDKINEATKDYEGLSVPVKIIVKDDRSFEIEVGIPPVSALIKRELGIEKGASNPGREVVGNLTMEQLLNIARIKRQQSLSYTLKEVVKEVLGTCNSMGITVEGKSPKELTRMIEEGQVEIPEE.

It belongs to the universal ribosomal protein uL11 family. In terms of assembly, part of the ribosomal stalk of the 50S ribosomal subunit. Interacts with L10 and the large rRNA to form the base of the stalk. L10 forms an elongated spine to which L12 dimers bind in a sequential fashion forming a multimeric L10(L12)X complex.

Functionally, forms part of the ribosomal stalk which helps the ribosome interact with GTP-bound translation factors. This Archaeoglobus fulgidus (strain ATCC 49558 / DSM 4304 / JCM 9628 / NBRC 100126 / VC-16) protein is Large ribosomal subunit protein uL11.